The primary structure comprises 125 residues: Probable prefoldin subunit 6 (125 aa).

This sequence belongs to the prefoldin subunit beta family. In terms of assembly, heterohexamer of two PFD-alpha type and four PFD-beta type subunits.

Binds specifically to cytosolic chaperonin (c-CPN) and transfers target proteins to it. Binds to nascent polypeptide chain and promotes folding in an environment in which there are many competing pathways for nonnative proteins. This is Probable prefoldin subunit 6 from Drosophila melanogaster (Fruit fly).